We begin with the raw amino-acid sequence, 143 residues long: Anti-sigma F factor (143 aa).

Belongs to the anti-sigma-factor family.

The enzyme catalyses L-seryl-[protein] + ATP = O-phospho-L-seryl-[protein] + ADP + H(+). The catalysed reaction is L-threonyl-[protein] + ATP = O-phospho-L-threonyl-[protein] + ADP + H(+). Binds to sigma F and blocks its ability to form an RNA polymerase holoenzyme (E-sigma F). Phosphorylates SpoIIAA on a serine residue. This phosphorylation may enable SpoIIAA to act as an anti-anti-sigma factor that counteracts SpoIIAB and thus releases sigma F from inhibition. This Clostridium botulinum (strain Eklund 17B / Type B) protein is Anti-sigma F factor.